A 454-amino-acid chain; its full sequence is F-box protein At1g67130 (454 aa).

The 50-residue stretch at 4–53 folds into the F-box domain; that stretch reads GETLDSIPTDLILDILSRLPTKSIARFHCVSKLWSSMLASQDFTRLFVNR.

The polypeptide is F-box protein At1g67130 (Arabidopsis thaliana (Mouse-ear cress)).